The sequence spans 744 residues: Adenosylcobalamin-dependent ribonucleoside-triphosphate reductase (744 aa).

Cys120 and Cys424 are disulfide-bonded. The tract at residues 148–159 is effector region-1; it reads SMPFSFLFDQLM. The segment at 169–318 is effector region-2; sequence VDDNINQIPQ…ICNLIGKTVV (150 aa). Residues Cys413 and Glu415 contribute to the active site. The adenosylcobalamin-binding-1 stretch occupies residues 570–631; it reads FHYAGYLIQR…SKNFASAGTV (62 aa). The segment at 690–729 is adenosylcobalamin-binding-2; that stretch reads LKQAPKEPINKKAYEDRVAMITGDVKEVFENQNKDQKGLE.

Belongs to the class II ribonucleoside-triphosphate reductase family. As to quaternary structure, monomer. Adenosylcob(III)alamin is required as a cofactor.

The enzyme catalyses a 2'-deoxyribonucleoside 5'-triphosphate + [thioredoxin]-disulfide + H2O = a ribonucleoside 5'-triphosphate + [thioredoxin]-dithiol. Its activity is regulated as follows. Allosterically regulated by ATP and dNTP. In Lactobacillus helveticus (strain DPC 4571), this protein is Adenosylcobalamin-dependent ribonucleoside-triphosphate reductase (rtpR).